Here is a 366-residue protein sequence, read N- to C-terminus: MRIVVSGGGTGGHIYPALAFIKEVKRHHEDVEFLYIGTEKGLEKNIVEREGIPFKAIEITGFKRKLSFENVKTVMRFLKGVKECKEELKRFKPDAVIGTGGYVCGPVVYAASKLGIPTIIHEQNSLPGLTNKFLSKYVDKVAICFDEAKTHFPAEKVVFTGNPRASEVVSIKGGRSLTALGLAEGKKTVLIFGGSRGAAPINEAVIAMQNELKKRDYQVLYVTGEVHYDKVTAALEKEGAAPNMVVQPFLHQMPEYLKAFDVVVGRAGATTIAEITALGIPSVLIPSPYVTANHQEVNARSLGEQNAAVVLKESELNGDRLIQAIDHILQDEKTLEEMKIRAKSLGVPDAAERLYNVLKELKHHAK.

UDP-N-acetyl-alpha-D-glucosamine contacts are provided by residues 10–12, asparagine 124, serine 195, and glutamine 295; that span reads TGG.

The protein belongs to the glycosyltransferase 28 family. MurG subfamily.

The protein localises to the cell membrane. It catalyses the reaction di-trans,octa-cis-undecaprenyl diphospho-N-acetyl-alpha-D-muramoyl-L-alanyl-D-glutamyl-meso-2,6-diaminopimeloyl-D-alanyl-D-alanine + UDP-N-acetyl-alpha-D-glucosamine = di-trans,octa-cis-undecaprenyl diphospho-[N-acetyl-alpha-D-glucosaminyl-(1-&gt;4)]-N-acetyl-alpha-D-muramoyl-L-alanyl-D-glutamyl-meso-2,6-diaminopimeloyl-D-alanyl-D-alanine + UDP + H(+). It functions in the pathway cell wall biogenesis; peptidoglycan biosynthesis. In terms of biological role, cell wall formation. Catalyzes the transfer of a GlcNAc subunit on undecaprenyl-pyrophosphoryl-MurNAc-pentapeptide (lipid intermediate I) to form undecaprenyl-pyrophosphoryl-MurNAc-(pentapeptide)GlcNAc (lipid intermediate II). In Bacillus licheniformis (strain ATCC 14580 / DSM 13 / JCM 2505 / CCUG 7422 / NBRC 12200 / NCIMB 9375 / NCTC 10341 / NRRL NRS-1264 / Gibson 46), this protein is UDP-N-acetylglucosamine--N-acetylmuramyl-(pentapeptide) pyrophosphoryl-undecaprenol N-acetylglucosamine transferase.